Here is a 68-residue protein sequence, read N- to C-terminus: Putative membrane protein insertion efficiency factor (68 aa).

This sequence belongs to the UPF0161 family.

It is found in the cell membrane. Could be involved in insertion of integral membrane proteins into the membrane. In Herpetosiphon aurantiacus (strain ATCC 23779 / DSM 785 / 114-95), this protein is Putative membrane protein insertion efficiency factor.